The primary structure comprises 160 residues: SsrA-binding protein (160 aa).

It belongs to the SmpB family.

The protein resides in the cytoplasm. Required for rescue of stalled ribosomes mediated by trans-translation. Binds to transfer-messenger RNA (tmRNA), required for stable association of tmRNA with ribosomes. tmRNA and SmpB together mimic tRNA shape, replacing the anticodon stem-loop with SmpB. tmRNA is encoded by the ssrA gene; the 2 termini fold to resemble tRNA(Ala) and it encodes a 'tag peptide', a short internal open reading frame. During trans-translation Ala-aminoacylated tmRNA acts like a tRNA, entering the A-site of stalled ribosomes, displacing the stalled mRNA. The ribosome then switches to translate the ORF on the tmRNA; the nascent peptide is terminated with the 'tag peptide' encoded by the tmRNA and targeted for degradation. The ribosome is freed to recommence translation, which seems to be the essential function of trans-translation. The chain is SsrA-binding protein from Sodalis glossinidius (strain morsitans).